The following is a 657-amino-acid chain: Probable Xaa-Pro aminopeptidase P (657 aa).

Residues Asp453, Asp464, Glu562, and Glu576 each coordinate Mn(2+).

This sequence belongs to the peptidase M24B family. Mn(2+) is required as a cofactor.

It catalyses the reaction Release of any N-terminal amino acid, including proline, that is linked to proline, even from a dipeptide or tripeptide.. Functionally, catalyzes the removal of a penultimate prolyl residue from the N-termini of peptides. In Talaromyces stipitatus (strain ATCC 10500 / CBS 375.48 / QM 6759 / NRRL 1006) (Penicillium stipitatum), this protein is Probable Xaa-Pro aminopeptidase P (ampp).